The sequence spans 349 residues: Ferredoxin--NADP reductase 1 (349 aa).

The FAD site is built by Glu36, Lys44, Tyr48, Val88, Leu123, Asp290, and Ser331.

The protein belongs to the ferredoxin--NADP reductase type 2 family. Homodimer. Requires FAD as cofactor.

The catalysed reaction is 2 reduced [2Fe-2S]-[ferredoxin] + NADP(+) + H(+) = 2 oxidized [2Fe-2S]-[ferredoxin] + NADPH. The polypeptide is Ferredoxin--NADP reductase 1 (Bacillus licheniformis (strain ATCC 14580 / DSM 13 / JCM 2505 / CCUG 7422 / NBRC 12200 / NCIMB 9375 / NCTC 10341 / NRRL NRS-1264 / Gibson 46)).